Here is a 168-residue protein sequence, read N- to C-terminus: Protein-export protein SecB (168 aa).

Belongs to the SecB family. In terms of assembly, homotetramer, a dimer of dimers. One homotetramer interacts with 1 SecA dimer.

The protein localises to the cytoplasm. One of the proteins required for the normal export of preproteins out of the cell cytoplasm. It is a molecular chaperone that binds to a subset of precursor proteins, maintaining them in a translocation-competent state. It also specifically binds to its receptor SecA. The chain is Protein-export protein SecB from Saccharophagus degradans (strain 2-40 / ATCC 43961 / DSM 17024).